The following is a 248-amino-acid chain: Ribosomal RNA small subunit methyltransferase G (248 aa).

S-adenosyl-L-methionine contacts are provided by residues G85, F90, 108–110 (DSS), 137–138 (AE), and R156.

This sequence belongs to the methyltransferase superfamily. RNA methyltransferase RsmG family.

It is found in the cytoplasm. Its function is as follows. Specifically methylates the N7 position of a guanine in 16S rRNA. This chain is Ribosomal RNA small subunit methyltransferase G, found in Prochlorococcus marinus (strain NATL1A).